The following is a 319-amino-acid chain: Ribonucleoside-diphosphate reductase small chain (319 aa).

Asp-70, Glu-101, and His-104 together coordinate Fe cation. The active site involves Tyr-108. Residues Glu-163, Glu-197, and His-200 each coordinate Fe cation. The interaction with R1 stretch occupies residues 313–319 (FSLDVDF).

It belongs to the ribonucleoside diphosphate reductase small chain family. Interacts with RNR1/OPG080 subunit. Can interact with host RNR1 supunit. The cofactor is Fe cation.

It carries out the reaction a 2'-deoxyribonucleoside 5'-diphosphate + [thioredoxin]-disulfide + H2O = a ribonucleoside 5'-diphosphate + [thioredoxin]-dithiol. In terms of biological role, ribonucleoside-diphosphate reductase holoenzyme provides the precursors necessary for viral DNA synthesis. Allows virus growth in non-dividing cells. Catalyzes the biosynthesis of deoxyribonucleotides from the corresponding ribonucleotides. The protein is Ribonucleoside-diphosphate reductase small chain (OPG048) of Vaccinia virus (strain L-IVP) (VACV).